The sequence spans 193 residues: Ion-translocating oxidoreductase complex subunit A (193 aa).

The next 6 membrane-spanning stretches (helical) occupy residues 5–25 (ILLIISTALINNFVLVKFLGL), 39–59 (IGMGLATMFVLTVASLCAYLV), 72–92 (LRTLIFILVIAVVVQFTEMVI), 102–122 (LLGIFLPLITTNCAVLGVALL), 134–154 (VIYGFSASLGFSLVLVLFAAL), and 171–191 (SIALITAGLMSLAFMGFSGLV).

It belongs to the NqrDE/RnfAE family. The complex is composed of six subunits: RnfA, RnfB, RnfC, RnfD, RnfE and RnfG.

The protein localises to the cell inner membrane. Functionally, part of a membrane-bound complex that couples electron transfer with translocation of ions across the membrane. This is Ion-translocating oxidoreductase complex subunit A from Histophilus somni (strain 2336) (Haemophilus somnus).